Here is a 220-residue protein sequence, read N- to C-terminus: Large ribosomal subunit protein bL25 (220 aa).

Residues 186–199 (ELEDEDEDEDEVAA) are compositionally biased toward acidic residues. The interval 186 to 220 (ELEDEDEDEDEVAADEVPATEVDDQAAVKEGEGKE) is disordered. Basic and acidic residues predominate over residues 211–220 (AAVKEGEGKE).

This sequence belongs to the bacterial ribosomal protein bL25 family. CTC subfamily. Part of the 50S ribosomal subunit; part of the 5S rRNA/L5/L18/L25 subcomplex. Contacts the 5S rRNA. Binds to the 5S rRNA independently of L5 and L18.

This is one of the proteins that binds to the 5S RNA in the ribosome where it forms part of the central protuberance. This Christiangramia forsetii (strain DSM 17595 / CGMCC 1.15422 / KT0803) (Gramella forsetii) protein is Large ribosomal subunit protein bL25.